Here is a 545-residue protein sequence, read N- to C-terminus: CTP synthase (545 aa).

Residues 1–265 (MTKYIFITGG…DEIVVKKLSL (265 aa)) form an amidoligase domain region. Serine 13 is a binding site for CTP. Serine 13 is a UTP binding site. Residues 14-19 (SLGKGI) and aspartate 71 each bind ATP. Residues aspartate 71 and glutamate 139 each contribute to the Mg(2+) site. Residues 146–148 (DIE), 186–191 (KTKPTQ), and lysine 222 contribute to the CTP site. Residues 186–191 (KTKPTQ) and lysine 222 each bind UTP. Residues 290–541 (KIAMVGKYTE…VFAARIHHQE (252 aa)) form the Glutamine amidotransferase type-1 domain. An L-glutamine-binding site is contributed by glycine 351. Cysteine 378 acts as the Nucleophile; for glutamine hydrolysis in catalysis. L-glutamine contacts are provided by residues 379–382 (LGMQ), glutamate 402, and arginine 469. Residues histidine 514 and glutamate 516 contribute to the active site.

This sequence belongs to the CTP synthase family. Homotetramer.

It carries out the reaction UTP + L-glutamine + ATP + H2O = CTP + L-glutamate + ADP + phosphate + 2 H(+). The catalysed reaction is L-glutamine + H2O = L-glutamate + NH4(+). The enzyme catalyses UTP + NH4(+) + ATP = CTP + ADP + phosphate + 2 H(+). It participates in pyrimidine metabolism; CTP biosynthesis via de novo pathway; CTP from UDP: step 2/2. Its activity is regulated as follows. Allosterically activated by GTP, when glutamine is the substrate; GTP has no effect on the reaction when ammonia is the substrate. The allosteric effector GTP functions by stabilizing the protein conformation that binds the tetrahedral intermediate(s) formed during glutamine hydrolysis. Inhibited by the product CTP, via allosteric rather than competitive inhibition. Its function is as follows. Catalyzes the ATP-dependent amination of UTP to CTP with either L-glutamine or ammonia as the source of nitrogen. Regulates intracellular CTP levels through interactions with the four ribonucleotide triphosphates. The sequence is that of CTP synthase from Legionella pneumophila (strain Lens).